Here is a 558-residue protein sequence, read N- to C-terminus: Thermosome subunit alpha (558 aa).

The disordered stretch occupies residues 536–558; sequence TEKGKKEGGEGAGAETPGAPSLE. Residues 548–558 show a composition bias toward low complexity; sequence GAETPGAPSLE.

It belongs to the TCP-1 chaperonin family. In terms of assembly, forms a Heterooligomeric complex of two stacked eight-membered rings.

Its function is as follows. Molecular chaperone; binds unfolded polypeptides in vitro, and has a weak ATPase activity. The chain is Thermosome subunit alpha (thsA) from Sulfolobus acidocaldarius (strain ATCC 33909 / DSM 639 / JCM 8929 / NBRC 15157 / NCIMB 11770).